Consider the following 76-residue polypeptide: Conotoxin ArMLCL-022 (76 aa).

An N-terminal signal peptide occupies residues 1-19; it reads MLCLPVFIILLLLASTAAS. A propeptide spanning residues 20–52 is cleaved from the precursor; that stretch reads NPLETRIQSDLIRAALEDADMKTERGFLGVLMK.

This sequence belongs to the conotoxin T superfamily. Expressed by the venom duct.

It localises to the secreted. The chain is Conotoxin ArMLCL-022 from Conus arenatus (Sand-dusted cone).